The primary structure comprises 315 residues: Zinc finger CCCH domain-containing protein 23 (315 aa).

The tract at residues 1–21 (MMIGENKNRPHPTIHIPQWDQ) is disordered. 2 C3H1-type zinc fingers span residues 131-157 (YSGTACPEFRKGSCRRGDSCEFSHGVF) and 165-189 (RYRTQPCKDGTSCRRRICFFAHTTE).

This is Zinc finger CCCH domain-containing protein 23 from Arabidopsis thaliana (Mouse-ear cress).